The sequence spans 50 residues: Insulin 2 (50 aa).

3 disulfides stabilise this stretch: C8–C36, C20–C49, and C35–C40.

This sequence belongs to the insulin family. As to quaternary structure, heterodimer of a B chain and an A chain linked by two disulfide bonds.

The protein localises to the secreted. Functionally, insulin decreases blood glucose concentration. It increases cell permeability to monosaccharides, amino acids and fatty acids. It accelerates glycolysis, the pentose phosphate cycle, and glycogen synthesis in liver. The sequence is that of Insulin 2 (ins2) from Batrachoididae sp. (Toadfish).